A 360-amino-acid polypeptide reads, in one-letter code: Phospho-N-acetylmuramoyl-pentapeptide-transferase (360 aa).

Transmembrane regions (helical) follow at residues 21–41 (YITVRANLALLTALFISLWIG), 73–93 (TMGGVMILFSIGVSTLLWANL), 94–114 (ANPYIWVCLFVLFGYGAIGFV), 132–152 (WKYFWMSVVALVAILWLYWLG), 168–188 (IMPQLGLFYIVLSYFVIVGTG), 199–219 (GLAIMPTALVAGAFALIAWAT), 239–259 (VVVFCTAIVGASLGFLWFNTY), 263–283 (VFMGDVGSLALGGALGVVAIL), 288–308 (FLLVIMGGVFVVEALSVILQV), and 338–358 (VIIRFWIISLMLVLMGLVTLK).

The protein belongs to the glycosyltransferase 4 family. MraY subfamily. Requires Mg(2+) as cofactor.

The protein localises to the cell inner membrane. It catalyses the reaction UDP-N-acetyl-alpha-D-muramoyl-L-alanyl-gamma-D-glutamyl-meso-2,6-diaminopimeloyl-D-alanyl-D-alanine + di-trans,octa-cis-undecaprenyl phosphate = di-trans,octa-cis-undecaprenyl diphospho-N-acetyl-alpha-D-muramoyl-L-alanyl-D-glutamyl-meso-2,6-diaminopimeloyl-D-alanyl-D-alanine + UMP. It functions in the pathway cell wall biogenesis; peptidoglycan biosynthesis. In terms of biological role, catalyzes the initial step of the lipid cycle reactions in the biosynthesis of the cell wall peptidoglycan: transfers peptidoglycan precursor phospho-MurNAc-pentapeptide from UDP-MurNAc-pentapeptide onto the lipid carrier undecaprenyl phosphate, yielding undecaprenyl-pyrophosphoryl-MurNAc-pentapeptide, known as lipid I. This chain is Phospho-N-acetylmuramoyl-pentapeptide-transferase, found in Haemophilus influenzae (strain ATCC 51907 / DSM 11121 / KW20 / Rd).